The primary structure comprises 208 residues: Large ribosomal subunit protein uL4 (208 aa).

Residues 58–77 (RGGGRKPWRQKGTGRARQGS) are disordered. Basic residues predominate over residues 60–71 (GGRKPWRQKGTG).

This sequence belongs to the universal ribosomal protein uL4 family. Part of the 50S ribosomal subunit.

Its function is as follows. One of the primary rRNA binding proteins, this protein initially binds near the 5'-end of the 23S rRNA. It is important during the early stages of 50S assembly. It makes multiple contacts with different domains of the 23S rRNA in the assembled 50S subunit and ribosome. In terms of biological role, forms part of the polypeptide exit tunnel. This is Large ribosomal subunit protein uL4 from Caldicellulosiruptor bescii (strain ATCC BAA-1888 / DSM 6725 / KCTC 15123 / Z-1320) (Anaerocellum thermophilum).